We begin with the raw amino-acid sequence, 109 residues long: Ribonuclease P protein component (109 aa).

Belongs to the RnpA family. Consists of a catalytic RNA component (M1 or rnpB) and a protein subunit.

It carries out the reaction Endonucleolytic cleavage of RNA, removing 5'-extranucleotides from tRNA precursor.. RNaseP catalyzes the removal of the 5'-leader sequence from pre-tRNA to produce the mature 5'-terminus. It can also cleave other RNA substrates such as 4.5S RNA. The protein component plays an auxiliary but essential role in vivo by binding to the 5'-leader sequence and broadening the substrate specificity of the ribozyme. This Streptococcus agalactiae serotype Ia (strain ATCC 27591 / A909 / CDC SS700) protein is Ribonuclease P protein component.